We begin with the raw amino-acid sequence, 261 residues long: Pimeloyl-[acyl-carrier protein] methyl ester esterase (261 aa).

The 226-residue stretch at 16-241 folds into the AB hydrolase-1 domain; the sequence is LVLLHGWGLN…HAAHAPFISH (226 aa). Substrate is bound by residues Trp-22, 82–83, and 143–147; these read SL and FLALQ. Residue Ser-82 is the Nucleophile of the active site. Residues Asp-207 and His-235 contribute to the active site. A substrate-binding site is contributed by His-235.

It belongs to the AB hydrolase superfamily. Carboxylesterase BioH family. As to quaternary structure, monomer.

It is found in the cytoplasm. The enzyme catalyses 6-carboxyhexanoyl-[ACP] methyl ester + H2O = 6-carboxyhexanoyl-[ACP] + methanol + H(+). It participates in cofactor biosynthesis; biotin biosynthesis. Functionally, the physiological role of BioH is to remove the methyl group introduced by BioC when the pimeloyl moiety is complete. It allows to synthesize pimeloyl-ACP via the fatty acid synthetic pathway through the hydrolysis of the ester bonds of pimeloyl-ACP esters. The polypeptide is Pimeloyl-[acyl-carrier protein] methyl ester esterase (Photorhabdus laumondii subsp. laumondii (strain DSM 15139 / CIP 105565 / TT01) (Photorhabdus luminescens subsp. laumondii)).